A 188-amino-acid chain; its full sequence is Elongation factor P (188 aa).

The protein belongs to the elongation factor P family.

It is found in the cytoplasm. It participates in protein biosynthesis; polypeptide chain elongation. Involved in peptide bond synthesis. Stimulates efficient translation and peptide-bond synthesis on native or reconstituted 70S ribosomes in vitro. Probably functions indirectly by altering the affinity of the ribosome for aminoacyl-tRNA, thus increasing their reactivity as acceptors for peptidyl transferase. The sequence is that of Elongation factor P from Rickettsia rickettsii (strain Iowa).